The primary structure comprises 91 residues: Probable Fe(2+)-trafficking protein (91 aa).

Belongs to the Fe(2+)-trafficking protein family.

In terms of biological role, could be a mediator in iron transactions between iron acquisition and iron-requiring processes, such as synthesis and/or repair of Fe-S clusters in biosynthetic enzymes. In Paraburkholderia phymatum (strain DSM 17167 / CIP 108236 / LMG 21445 / STM815) (Burkholderia phymatum), this protein is Probable Fe(2+)-trafficking protein.